Consider the following 263-residue polypeptide: Uroporphyrinogen-III C-methyltransferase (263 aa).

S-adenosyl-L-homocysteine-binding positions include proline 20, 96 to 98 (GGD), 126 to 127 (TA), methionine 180, and alanine 237.

This sequence belongs to the precorrin methyltransferase family.

It catalyses the reaction uroporphyrinogen III + 2 S-adenosyl-L-methionine = precorrin-2 + 2 S-adenosyl-L-homocysteine + H(+). Its pathway is cofactor biosynthesis; adenosylcobalamin biosynthesis; precorrin-2 from uroporphyrinogen III: step 1/1. The protein operates within porphyrin-containing compound metabolism; siroheme biosynthesis; precorrin-2 from uroporphyrinogen III: step 1/1. In terms of biological role, catalyzes the two successive C-2 and C-7 methylation reactions involved in the conversion of uroporphyrinogen III to precorrin-2 via the intermediate formation of precorrin-1. It is a step in the biosynthesis of both cobalamin (vitamin B12) and siroheme. In Synechocystis sp. (strain ATCC 27184 / PCC 6803 / Kazusa), this protein is Uroporphyrinogen-III C-methyltransferase (cobA).